The primary structure comprises 762 residues: 5-methyltetrahydropteroyltriglutamate--homocysteine methyltransferase (762 aa).

5-methyltetrahydropteroyltri-L-glutamate-binding positions include 17–20 (REWK) and Lys111. L-homocysteine contacts are provided by residues 435-437 (IGS) and Glu488. L-methionine-binding positions include 435 to 437 (IGS) and Glu488. Residues 519 to 520 (RC) and Trp565 contribute to the 5-methyltetrahydropteroyltri-L-glutamate site. An L-homocysteine-binding site is contributed by Asp603. An L-methionine-binding site is contributed by Asp603. Position 609 (Glu609) interacts with 5-methyltetrahydropteroyltri-L-glutamate. Zn(2+)-binding residues include His645, Cys647, and Glu669. The Proton donor role is filled by His698. Zn(2+) is bound at residue Cys730.

This sequence belongs to the vitamin-B12 independent methionine synthase family. Zn(2+) serves as cofactor.

It carries out the reaction 5-methyltetrahydropteroyltri-L-glutamate + L-homocysteine = tetrahydropteroyltri-L-glutamate + L-methionine. It functions in the pathway amino-acid biosynthesis; L-methionine biosynthesis via de novo pathway; L-methionine from L-homocysteine (MetE route): step 1/1. Catalyzes the transfer of a methyl group from 5-methyltetrahydrofolate to homocysteine resulting in methionine formation. The protein is 5-methyltetrahydropteroyltriglutamate--homocysteine methyltransferase of Bacillus cereus (strain AH187).